The primary structure comprises 385 residues: U6 small nuclear RNA (adenine-(43)-N(6))-methyltransferase (385 aa).

Positions 54, 83, 106, and 155 each coordinate S-adenosyl-L-methionine.

It belongs to the methyltransferase superfamily. METTL16/RlmF family.

It is found in the cytoplasm. The protein resides in the nucleus. It catalyses the reaction adenosine in U6 snRNA + S-adenosyl-L-methionine = N(6)-methyladenosine in U6 snRNA + S-adenosyl-L-homocysteine + H(+). RNA N6-methyltransferase that mediates N6-methylation of adenine of U6 small nuclear RNA (U6 snRNA). The polypeptide is U6 small nuclear RNA (adenine-(43)-N(6))-methyltransferase (Schizosaccharomyces pombe (strain 972 / ATCC 24843) (Fission yeast)).